The primary structure comprises 949 residues: MAM domain-containing glycosylphosphatidylinositol anchor protein 1 (949 aa).

An N-terminal signal peptide occupies residues 1–18; it reads MEMICVLFLSLVPAYSRG. Ig-like domains follow at residues 24–125 and 132–230; these read PAQA…IRVD and PVLT…KSIT. Residues Asn-42 and Asn-90 are each glycosylated (N-linked (GlcNAc...) asparagine). 2 disulfides stabilise this stretch: Cys-60–Cys-108 and Cys-157–Cys-214. N-linked (GlcNAc...) asparagine glycans are attached at residues Asn-235, Asn-247, Asn-257, Asn-292, Asn-307, and Asn-331. Residues 240-323 form the Ig-like 3 domain; that stretch reads PALKLSVNET…VGNPAKKTVN (84 aa). Cys-262 and Cys-308 form a disulfide bridge. Ig-like domains lie at 338 to 432, 440 to 531, and 537 to 625; these read PDVI…VEVN, PTIS…ALVQ, and PPVV…FQVS. Cys-357 and Cys-415 form a disulfide bridge. N-linked (GlcNAc...) asparagine glycosylation is present at Asn-432. Cystine bridges form between Cys-463–Cys-513 and Cys-559–Cys-609. 3 N-linked (GlcNAc...) asparagine glycosylation sites follow: Asn-577, Asn-649, and Asn-820. The region spanning 637-737 is the Fibronectin type-III domain; sequence TPNPTLSQKQ…ARIIRYMEPI (101 aa). In terms of domain architecture, MAM spans 745–912; that stretch reads NTCRFEDEKI…VTLKKGDCPR (168 aa). Ser-926 is lipidated: GPI-anchor amidated serine. The propeptide at 927–949 is removed in mature form; that stretch reads GVSAQHGPCLCGPLTFFLYVLLR.

Interacts heterophilically through its MAM domain with proteins in axon-rich regions and through its Ig-like domains with proteins in differentiating muscle. As to expression, in the embryonic brachial spinal cord, selectively expressed by medial lateral motor column neurons, some populations of dorsal root ganglion neurons, and interneurons.

Its subcellular location is the cell membrane. Its function is as follows. Required for radial migration of cortical neurons in the superficial layer of the neocortex. The chain is MAM domain-containing glycosylphosphatidylinositol anchor protein 1 from Gallus gallus (Chicken).